Here is an 86-residue protein sequence, read N- to C-terminus: U2-sicaritoxin-Li1a (86 aa).

The N-terminal stretch at 1 to 20 (MTFKLFVVVTLVLAIYVATA) is a signal peptide. Residues 21 to 33 (EEAMKDDSEPAER) constitute a propeptide that is removed on maturation. Cystine bridges form between C35–C53, C42–C62, C52–C71, and C64–C69.

It belongs to the neurotoxin 39 family. Expressed by the venom gland.

It is found in the secreted. In terms of biological role, toxin active against S.frugiperda larvae. May act on sodium channels (Nav). In Loxosceles intermedia (Brown spider), this protein is U2-sicaritoxin-Li1a.